Consider the following 473-residue polypeptide: MGERRRANASRGDKKVANGEKQHVGQWGRAWEVDYFSLASVIFLLAFAPLIVYYFVMSCDQYQCALTAPVLDLYSGKARLSDIWDKTPALTWTAVKIYLAWVSFQVFLYMFLPDILHKFVPGYEGGVQEGARTPAGLINKYQVNGLQAWTITHLLWFANAYHFHWFSPTIVIDNWIPLLWCANLLGYSVATFALVKANFFPTNANDCKFTGNFFYDYMMGIEFNPRIGKWFDFKLFFNGRPGIVAWTLINLSYAAKQQELYGQVTNSMILVNVLQAIYVVDFFWNESWYLKTIDICHDHFGWYLGWGDCVWLPYLYTLQGLYLVYNPVELSTTAAVAVLLLGLIGYYIFRMTNHQKDLFRRTNGNCKIWGKKPKSIECFYVSADGKRHYSKLMISGFWGVARHLNYTGDLMGSLAYCLACGFDHLLPYFYFIYMTILLVHRCIRDEHRCSSKYGKDWKLYTSAVPYRLLPGLF.

Positions 1–20 (MGERRRANASRGDKKVANGE) are disordered. Transmembrane regions (helical) follow at residues 36-56 (FSLA…YYFV), 97-117 (IYLA…DILH), 175-195 (WIPL…FALV), 264-284 (VTNS…DFFW), 304-324 (LGWG…LYLV), and 329-349 (ELST…YYIF). NADP(+) contacts are provided by residues lysine 356, arginine 360, methionine 393, tryptophan 398, and 405–406 (NY). A helical transmembrane segment spans residues 419-439 (ACGFDHLLPYFYFIYMTILLV). Residues aspartate 445, 449 to 453 (CSSKY), and tyrosine 460 each bind NADP(+).

It belongs to the ERG4/ERG24 family.

The protein localises to the endoplasmic reticulum membrane. The catalysed reaction is cholesterol + NADP(+) = 7-dehydrocholesterol + NADPH + H(+). It catalyses the reaction 7-dehydrodesmosterol + NADPH + H(+) = desmosterol + NADP(+). It functions in the pathway steroid biosynthesis; cholesterol biosynthesis. In terms of biological role, catalyzes the last step of the cholesterol synthesis pathway, which transforms cholesta-5,7-dien-3beta-ol (7-dehydrocholesterol,7-DHC) into cholesterol by reducing the C7-C8 double bond of its sterol core. Can also metabolize cholesta-5,7,24-trien-3beta-ol (7-dehydrodemosterol, 7-DHD) to desmosterol, which is then metabolized by the Delta(24)-sterol reductase (DHCR24) to cholesterol. Modulates ferroptosis (a form of regulated cell death driven by iron-dependent lipid peroxidation) through the metabolic breakdown of the anti-ferroptotic metabolites 7-DHC and 7-DHD which, when accumulated, divert the propagation of peroxyl radical-mediated damage from phospholipid components to its sterol core, protecting plasma and mitochondrial membranes from phospholipid autoxidation. This is 7-dehydrocholesterol reductase (dhcr7) from Xenopus laevis (African clawed frog).